We begin with the raw amino-acid sequence, 86 residues long: Large ribosomal subunit protein eL20 (86 aa).

It belongs to the eukaryotic ribosomal protein eL20 family. In terms of assembly, part of the 50S ribosomal subunit. Binds 23S rRNA.

The polypeptide is Large ribosomal subunit protein eL20 (Sulfolobus acidocaldarius (strain ATCC 33909 / DSM 639 / JCM 8929 / NBRC 15157 / NCIMB 11770)).